The chain runs to 518 residues: Glutamate--cysteine ligase (518 aa).

It belongs to the glutamate--cysteine ligase type 1 family. Type 1 subfamily.

The catalysed reaction is L-cysteine + L-glutamate + ATP = gamma-L-glutamyl-L-cysteine + ADP + phosphate + H(+). The protein operates within sulfur metabolism; glutathione biosynthesis; glutathione from L-cysteine and L-glutamate: step 1/2. In Salmonella agona (strain SL483), this protein is Glutamate--cysteine ligase.